Reading from the N-terminus, the 1413-residue chain is GTPase-activating protein and VPS9 domain-containing protein 1 (1413 aa).

The region spanning 147–385 (SYLLQVLRYL…AAFLDVVIGG (239 aa)) is the Ras-GAP domain. Ser-227 carries the post-translational modification Phosphoserine. Thr-390 and Thr-458 each carry phosphothreonine. Disordered stretches follow at residues 448-474 (KPGK…PANK), 540-587 (LSDG…GSNG), 718-799 (ESCS…PPSQ), and 826-852 (HYAR…ARLP). Over residues 451–467 (KSSSLEMTPYSTPQLSP) the composition is skewed to polar residues. The residue at position 460 (Tyr-460) is a Phosphotyrosine. Position 466 is a phosphoserine (Ser-466). Phosphothreonine is present on Thr-470. 3 positions are modified to phosphoserine: Ser-721, Ser-725, and Ser-736. A compositionally biased stretch (polar residues) spans 737 to 756 (SRPSTPGLSVVSGISATSED). Thr-741 carries the phosphothreonine modification. Residue Ser-745 is modified to Phosphoserine. Residues 757 to 768 (IPNKIEDLRSEC) show a composition bias toward basic and acidic residues. Phosphoserine is present on residues Ser-856, Ser-882, Ser-883, Ser-888, Ser-894, Ser-946, Ser-972, and Ser-999. Over residues 871 to 882 (HSYPERLVRSRS) the composition is skewed to basic and acidic residues. Positions 871 to 957 (HSYPERLVRS…DEKSDRNRPW (87 aa)) are disordered. Residues 883–897 (SDVVSSVRRPMSDPS) show a composition bias toward low complexity. Positions 934–955 (DSSRGETEERKDSDDEKSDRNR) are enriched in basic and acidic residues. The tract at residues 1011–1049 (VMGDGESAHDSPRDETLQNISADDLPDSASQAAHPQDSA) is disordered. Positions 1016–1026 (ESAHDSPRDET) are enriched in basic and acidic residues. Phosphoserine occurs at positions 1031 and 1038. The region spanning 1273–1413 (ILRDQVLHEH…EFIKTIDDRK (141 aa)) is the VPS9 domain.

The protein belongs to the GAPVD1 family. As to quaternary structure, interacts with TRIP10/CIP4. Interacts with RAB5A.

Its subcellular location is the membrane. The protein localises to the endosome. Its function is as follows. Acts both as a GTPase-activating protein (GAP) and a guanine nucleotide exchange factor (GEF), and participates in various processes such as endocytosis, insulin receptor internalization or LC2A4/GLUT4 trafficking. Acts as a GEF for the Ras-related protein RAB31 by exchanging bound GDP for free GTP, leading to regulate LC2A4/GLUT4 trafficking. In the absence of insulin, it maintains RAB31 in an active state and promotes a futile cycle between LC2A4/GLUT4 storage vesicles and early endosomes, retaining LC2A4/GLUT4 inside the cells. Upon insulin stimulation, it is translocated to the plasma membrane, releasing LC2A4/GLUT4 from intracellular storage vesicles. Also involved in EGFR trafficking and degradation, possibly by promoting EGFR ubiquitination and subsequent degradation by the proteasome. Has GEF activity for Rab5 and GAP activity for Ras. The sequence is that of GTPase-activating protein and VPS9 domain-containing protein 1 (GAPVD1) from Bos taurus (Bovine).